A 480-amino-acid polypeptide reads, in one-letter code: Nuclear receptor subfamily 6 group A member 1 (480 aa).

A disordered region spans residues 1–32; the sequence is MERDEPPPSGGGGGGGSAGFLEPPAALPPPPR. Residues 57-132 constitute a DNA-binding region (nuclear receptor); sequence QRTCLICGDR…MGMNRKAIRE (76 aa). Zn(2+)-binding residues include Cys60, Cys63, Cys77, Cys80, Cys96, Cys102, Cys112, and Cys115. NR C4-type zinc fingers lie at residues 60–80 and 96–120; these read CLIC…CEGC and CSRD…LLKC. 2 disordered regions span residues 131 to 150 and 162 to 199; these read REDG…QISE and FEEE…LSSS. A compositionally biased stretch (basic and acidic residues) spans 165 to 177; it reads EANHWSNHGDSDH. The segment at 172 to 253 is sufficient for interaction with UIMC1; it reads HGDSDHSSPG…RSLDPQSYSL (82 aa). Over residues 187–199 the composition is skewed to low complexity; sequence SNQPSPGSTLSSS. One can recognise an NR LBD domain in the interval 249–480; sequence QSYSLIHQLL…HSCKTSVGKE (232 aa).

The protein belongs to the nuclear hormone receptor family. NR6 subfamily. In terms of assembly, homodimer. Interacts with UIMC1. As to expression, shows highest expression in the germ cells of the adult testis.

The protein resides in the nucleus. In terms of biological role, orphan nuclear receptor that binds to a response element containing the sequence 5'-TCAAGGTCA-3'. Acts as a regulator of embryonic stem cell pluripotency by mediating repression of POU5F1/OCT4: binds to the DR0 element within the POU5F1/OCT4 promoter and inhibits POU5F1/OCT4 expression during embryonic stem cell differentiation. Involved in the regulation of gene expression in germ cell development during gametogenesis. In Homo sapiens (Human), this protein is Nuclear receptor subfamily 6 group A member 1 (NR6A1).